Consider the following 256-residue polypeptide: Type III pantothenate kinase (256 aa).

6-13 (DCGNTNTV) provides a ligand contact to ATP. Residue 107–110 (GPDR) coordinates substrate. Aspartate 109 serves as the catalytic Proton acceptor. A K(+)-binding site is contributed by aspartate 129. Threonine 132 provides a ligand contact to ATP. Threonine 184 contributes to the substrate binding site.

This sequence belongs to the type III pantothenate kinase family. As to quaternary structure, homodimer. NH4(+) is required as a cofactor. The cofactor is K(+).

Its subcellular location is the cytoplasm. It carries out the reaction (R)-pantothenate + ATP = (R)-4'-phosphopantothenate + ADP + H(+). The protein operates within cofactor biosynthesis; coenzyme A biosynthesis; CoA from (R)-pantothenate: step 1/5. In terms of biological role, catalyzes the phosphorylation of pantothenate (Pan), the first step in CoA biosynthesis. In Dinoroseobacter shibae (strain DSM 16493 / NCIMB 14021 / DFL 12), this protein is Type III pantothenate kinase.